The chain runs to 342 residues: Phomopsin biosynthesis cluster protein B (342 aa).

A disordered region spans residues 1 to 22 (MESIAKAKSLPNKGRTYDSQRP). A helical transmembrane segment spans residues 87–107 (VLIIGCAVISLFAIIGALGFA). Residues 118–186 (CASPAHQNPH…QCGESPDEAQ (69 aa)) are disordered. The span at 144–155 (HSGSHSSSSSTN) shows a compositional bias: low complexity. Asn-248 carries N-linked (GlcNAc...) asparagine glycosylation.

It is found in the membrane. Part of the gene cluster that mediates the biosynthesis of the phomopsins, a group of hexapeptide mycotoxins which infects lupins and causes lupinosis disease in livestock. The role of phomB within the phomopsins biosynthesis pathway has still to be determined. The pathway starts with the processing of the precursor phomA by several endopeptidases including kexin proteases as well as the cluster-specific S41 family peptidase phomP1 and the oligopeptidase phomG to produce 10 identical copies of the hexapeptide Tyr-Val-Ile-Pro-Ile-Asp. After being excised from the precursor peptide, the core peptides are cyclized and modified post-translationally by enzymes encoded within the gene cluster. The timing and order of proteolysis of the phomA precursor and PTMs are still unknown. Two tyrosinase-like enzymes, phomQ1 and phomQ2, catalyze the chlorination and hydroxylation of Tyr, respectively. PhomYb, is proposed to be involved in the construction of the macrocyclic structure. The other 4 ustYa family proteins may be involved in PTMs that generate the unique structure of phomopsin A. PhomYa is required for the hydroxylation of C-beta of Tyr. PhomYc, phomYd, and phomYe are responsible for the biosynthesis of 2,3-dehydroisoleucine (dIle), 2,3-dehydroaspartic acid (dAsp), and 3,4-dehydroproline (dPro), respectively. While dIle formation by phomYc is indispensable for the installation of dAsp by phomYd, the order of the other PTMs have not been elucidated yet. Most of the biosynthetic enzymes likely have broad substrate specificity, and thus, there might be a metabolic grid from a precursor to phomopsin A. The enzyme(s) responsible for the biosynthesis of 3,4-dehydrovaline (dVal) have also not been identified yet. Finally, phomM acts as an S-adenosylmethionine-dependent alpha-N-methyltransferase that catalyzes two successive N-methylation reactions, converting N-desmethyl-phomopsin A to phomopsin A and phomopsin A further to an N,N-dimethylated congener called phomopsin E. The sequence is that of Phomopsin biosynthesis cluster protein B from Diaporthe leptostromiformis (Lupinosis disease fungus).